A 910-amino-acid chain; its full sequence is Putative coatomer subunit beta'-3 (910 aa).

9 WD repeats span residues 13 to 52 (QRSE…MVKS), 55 to 94 (VTEL…KVKV), 97 to 136 (AHTD…MCTQ), 140 to 180 (GHSH…PNFT), 183 to 224 (GHSK…CVQT), 227 to 266 (GHAH…LENT), 269 to 309 (YGLE…ASMD), 351 to 393 (TCDL…GSAL), and 461 to 501 (RIDV…SHLD). Residues 865-884 (ENGVEESQEDAVEVDVEADG) show a composition bias toward acidic residues. Residues 865-910 (ENGVEESQEDAVEVDVEADGSTDGTVLVNGNDTEEQWGTNNEESLA) are disordered. Over residues 886–910 (TDGTVLVNGNDTEEQWGTNNEESLA) the composition is skewed to polar residues.

This sequence belongs to the WD repeat COPB2 family. Oligomeric complex that consists of at least the alpha, beta, beta', gamma, delta, epsilon and zeta subunits.

It localises to the cytoplasm. Its subcellular location is the golgi apparatus membrane. The protein localises to the cytoplasmic vesicle. The protein resides in the COPI-coated vesicle membrane. Functionally, the coatomer is a cytosolic protein complex that binds to dilysine motifs and reversibly associates with Golgi non-clathrin-coated vesicles, which further mediate biosynthetic protein transport from the ER, via the Golgi up to the trans Golgi network. Coatomer complex is required for budding from Golgi membranes, and is essential for the retrograde Golgi-to-ER transport of dilysine-tagged proteins. The sequence is that of Putative coatomer subunit beta'-3 from Oryza sativa subsp. japonica (Rice).